We begin with the raw amino-acid sequence, 152 residues long: Small ribosomal subunit protein uS11 (152 aa).

Residues 133–152 form a disordered region; it reads VTPIPTDSTRRKSGHRGRRL. Positions 143–152 are enriched in basic residues; that stretch reads RKSGHRGRRL.

Belongs to the universal ribosomal protein uS11 family. As to quaternary structure, component of the small ribosomal subunit. Part of the small subunit (SSU) processome, composed of more than 70 proteins and the RNA chaperone small nucleolar RNA (snoRNA) U3.

It is found in the cytoplasm. The protein localises to the nucleus. It localises to the nucleolus. Component of the small ribosomal subunit. The ribosome is a large ribonucleoprotein complex responsible for the synthesis of proteins in the cell. Part of the small subunit (SSU) processome, first precursor of the small eukaryotic ribosomal subunit. During the assembly of the SSU processome in the nucleolus, many ribosome biogenesis factors, an RNA chaperone and ribosomal proteins associate with the nascent pre-rRNA and work in concert to generate RNA folding, modifications, rearrangements and cleavage as well as targeted degradation of pre-ribosomal RNA by the RNA exosome. This chain is Small ribosomal subunit protein uS11 (rps14), found in Dictyostelium discoideum (Social amoeba).